Consider the following 303-residue polypeptide: Methionyl-tRNA formyltransferase (303 aa).

111–114 (SLLP) contributes to the (6S)-5,6,7,8-tetrahydrofolate binding site.

This sequence belongs to the Fmt family.

It carries out the reaction L-methionyl-tRNA(fMet) + (6R)-10-formyltetrahydrofolate = N-formyl-L-methionyl-tRNA(fMet) + (6S)-5,6,7,8-tetrahydrofolate + H(+). Its function is as follows. Attaches a formyl group to the free amino group of methionyl-tRNA(fMet). The formyl group appears to play a dual role in the initiator identity of N-formylmethionyl-tRNA by promoting its recognition by IF2 and preventing the misappropriation of this tRNA by the elongation apparatus. The polypeptide is Methionyl-tRNA formyltransferase (Ehrlichia canis (strain Jake)).